Here is a 228-residue protein sequence, read N- to C-terminus: Thermonuclease (228 aa).

An N-terminal signal peptide occupies residues 1–23 (MTEYLLSAGICMAIVSILLIGMA). A propeptide spanning residues 24–60 (ISNVSKGQYAKRFFFFATSCLVLTLVVVSSLSSSANA) is cleaved from the precursor. Position 100 (D100) interacts with Ca(2+). R114 is a catalytic residue. The Ca(2+) site is built by D119 and T120. Catalysis depends on residues E122 and R166.

This sequence belongs to the thermonuclease family. Ca(2+) is required as a cofactor.

Its subcellular location is the secreted. It catalyses the reaction Endonucleolytic cleavage to nucleoside 3'-phosphates and 3'-phosphooligonucleotide end-products.. Functionally, enzyme that catalyzes the hydrolysis of both DNA and RNA at the 5' position of the phosphodiester bond. The protein is Thermonuclease (nuc) of Staphylococcus aureus (strain MSSA476).